The sequence spans 300 residues: Large ribosomal subunit protein bL9m (300 aa).

The protein belongs to the bacterial ribosomal protein bL9 family. Component of the mitochondrial large ribosomal subunit (mt-LSU). Mature N.crassa 74S mitochondrial ribosomes consist of a small (37S) and a large (54S) subunit. The 37S small subunit contains a 16S ribosomal RNA (16S mt-rRNA) and 32 different proteins. The 54S large subunit contains a 23S rRNA (23S mt-rRNA) and 42 different proteins.

It localises to the mitochondrion. Functionally, component of the mitochondrial ribosome (mitoribosome), a dedicated translation machinery responsible for the synthesis of mitochondrial genome-encoded proteins, including at least some of the essential transmembrane subunits of the mitochondrial respiratory chain. The mitoribosomes are attached to the mitochondrial inner membrane and translation products are cotranslationally integrated into the membrane. This is Large ribosomal subunit protein bL9m (mrpl50) from Neurospora crassa (strain ATCC 24698 / 74-OR23-1A / CBS 708.71 / DSM 1257 / FGSC 987).